A 545-amino-acid chain; its full sequence is CTP synthase (545 aa).

Positions 1-266 are amidoligase domain; the sequence is MATNYIFVTG…DSFVCDRFRL (266 aa). Ser-14 provides a ligand contact to CTP. UTP is bound at residue Ser-14. ATP contacts are provided by residues 15-20 and Asp-72; that span reads SLGKGI. The Mg(2+) site is built by Asp-72 and Glu-140. Residues 147–149, 187–192, and Lys-223 contribute to the CTP site; these read DIE and KTKPTQ. UTP-binding positions include 187 to 192 and Lys-223; that span reads KTKPTQ. An ATP-binding site is contributed by 239 to 241; sequence KDV. Residues 291-542 enclose the Glutamine amidotransferase type-1 domain; that stretch reads TIGMVGKYVE…VAAAKAYQDS (252 aa). Gly-352 is a binding site for L-glutamine. Catalysis depends on Cys-379, which acts as the Nucleophile; for glutamine hydrolysis. Residues 380-383, Glu-403, and Arg-470 each bind L-glutamine; that span reads LGMQ. Catalysis depends on residues His-515 and Glu-517.

Belongs to the CTP synthase family. Homotetramer.

The catalysed reaction is UTP + L-glutamine + ATP + H2O = CTP + L-glutamate + ADP + phosphate + 2 H(+). The enzyme catalyses L-glutamine + H2O = L-glutamate + NH4(+). It carries out the reaction UTP + NH4(+) + ATP = CTP + ADP + phosphate + 2 H(+). It functions in the pathway pyrimidine metabolism; CTP biosynthesis via de novo pathway; CTP from UDP: step 2/2. Allosterically activated by GTP, when glutamine is the substrate; GTP has no effect on the reaction when ammonia is the substrate. The allosteric effector GTP functions by stabilizing the protein conformation that binds the tetrahedral intermediate(s) formed during glutamine hydrolysis. Inhibited by the product CTP, via allosteric rather than competitive inhibition. Functionally, catalyzes the ATP-dependent amination of UTP to CTP with either L-glutamine or ammonia as the source of nitrogen. Regulates intracellular CTP levels through interactions with the four ribonucleotide triphosphates. This Haemophilus ducreyi (strain 35000HP / ATCC 700724) protein is CTP synthase.